We begin with the raw amino-acid sequence, 327 residues long: Gibberellin 2-beta-dioxygenase 3 (327 aa).

In terms of domain architecture, Fe2OG dioxygenase spans 173-278; sequence GSDQVFRVNH…RVSFIYFGGP (106 aa). Tyr-183 is a binding site for 2-oxoglutarate. 3 residues coordinate Fe cation: His-202, Asp-204, and His-259. Residues Arg-269 and Ser-271 each coordinate 2-oxoglutarate.

The protein belongs to the iron/ascorbate-dependent oxidoreductase family. GA2OX subfamily. L-ascorbate serves as cofactor. Fe(2+) is required as a cofactor. Expressed in roots, shoot apex, leaf blades, leaf sheaths, stems and flowers.

It catalyses the reaction gibberellin A1 + 2-oxoglutarate + O2 = gibberellin A8 + succinate + CO2. Catalyzes the 2-beta-hydroxylation of several biologically active gibberellins, leading to the homeostatic regulation of their endogenous level. Catabolism of gibberellins (GAs) plays a central role in plant development. In vitro, converts GA1, GA20, and GA29 to the corresponding 2-beta-hydroxylated products GA8, GA29-catabolite, respectively. The sequence is that of Gibberellin 2-beta-dioxygenase 3 from Oryza sativa subsp. japonica (Rice).